The following is a 343-amino-acid chain: Methionine import ATP-binding protein MetN (343 aa).

In terms of domain architecture, ABC transporter spans 2 to 241; that stretch reads IKLSNITKVF…PKTPLAQKFI (240 aa). 38–45 is a binding site for ATP; sequence GASGAGKS.

Belongs to the ABC transporter superfamily. Methionine importer (TC 3.A.1.24) family. The complex is composed of two ATP-binding proteins (MetN), two transmembrane proteins (MetI) and a solute-binding protein (MetQ).

Its subcellular location is the cell inner membrane. The catalysed reaction is L-methionine(out) + ATP + H2O = L-methionine(in) + ADP + phosphate + H(+). The enzyme catalyses D-methionine(out) + ATP + H2O = D-methionine(in) + ADP + phosphate + H(+). In terms of biological role, part of the ABC transporter complex MetNIQ involved in methionine import. Responsible for energy coupling to the transport system. This chain is Methionine import ATP-binding protein MetN, found in Escherichia coli O6:K15:H31 (strain 536 / UPEC).